Consider the following 496-residue polypeptide: Lysine--tRNA ligase (496 aa).

Residues E408 and E415 each contribute to the Mg(2+) site.

The protein belongs to the class-II aminoacyl-tRNA synthetase family. Homodimer. The cofactor is Mg(2+).

It localises to the cytoplasm. It catalyses the reaction tRNA(Lys) + L-lysine + ATP = L-lysyl-tRNA(Lys) + AMP + diphosphate. In Legionella pneumophila (strain Lens), this protein is Lysine--tRNA ligase.